We begin with the raw amino-acid sequence, 73 residues long: DNA-directed RNA polymerase subunit omega (73 aa).

This sequence belongs to the RNA polymerase subunit omega family. The RNAP catalytic core consists of 2 alpha, 1 beta, 1 beta' and 1 omega subunit. When a sigma factor is associated with the core the holoenzyme is formed, which can initiate transcription.

It carries out the reaction RNA(n) + a ribonucleoside 5'-triphosphate = RNA(n+1) + diphosphate. Its function is as follows. Promotes RNA polymerase assembly. Latches the N- and C-terminal regions of the beta' subunit thereby facilitating its interaction with the beta and alpha subunits. This is DNA-directed RNA polymerase subunit omega from Oleidesulfovibrio alaskensis (strain ATCC BAA-1058 / DSM 17464 / G20) (Desulfovibrio alaskensis).